The primary structure comprises 161 residues: Nucleotide-binding protein Daci_4781 (161 aa).

The protein belongs to the YajQ family.

Nucleotide-binding protein. This is Nucleotide-binding protein Daci_4781 from Delftia acidovorans (strain DSM 14801 / SPH-1).